The primary structure comprises 212 residues: Redox-sensing transcriptional repressor Rex (212 aa).

Residues 18–57 constitute a DNA-binding region (H-T-H motif); sequence LYYRFVNTLKSKGIDRVNSKAISEALNIESATIRRDFSYF. 92–97 is an NAD(+) binding site; it reads GVGNLG.

This sequence belongs to the transcriptional regulatory Rex family. In terms of assembly, homodimer.

Its subcellular location is the cytoplasm. Functionally, modulates transcription in response to changes in cellular NADH/NAD(+) redox state. This Staphylococcus haemolyticus (strain JCSC1435) protein is Redox-sensing transcriptional repressor Rex.